We begin with the raw amino-acid sequence, 84 residues long: Conophysin-R (84 aa).

Intrachain disulfides connect Cys-6–Cys-46, Cys-9–Cys-20, Cys-14–Cys-36, Cys-21–Cys-26, Cys-53–Cys-71, Cys-65–Cys-83, and Cys-72–Cys-77.

As to expression, expressed by the venom duct.

The protein resides in the secreted. Targets vasopressin-oxytocin related receptors. No effect observed when injected into goldfish or into mice. This chain is Conophysin-R, found in Conus radiatus (Rayed cone).